The primary structure comprises 271 residues: Urease accessory protein UreD (271 aa).

The protein belongs to the UreD family. UreD, UreF and UreG form a complex that acts as a GTP-hydrolysis-dependent molecular chaperone, activating the urease apoprotein by helping to assemble the nickel containing metallocenter of UreC. The UreE protein probably delivers the nickel.

The protein localises to the cytoplasm. Functionally, required for maturation of urease via the functional incorporation of the urease nickel metallocenter. This is Urease accessory protein UreD from Haemophilus influenzae (strain PittEE).